The sequence spans 74 residues: Cytochrome c oxidase subunit 2 (74 aa).

Over 1 to 14 (MAHPSQLGLQDAAS) the chain is Mitochondrial intermembrane. A helical transmembrane segment spans residues 15–45 (PVMEELLHFHDHALMIVFLISTLVLYIIVAM). Residues 46-74 (VSTKLTDKYTIDSQEIEIVWTVLPAVILI) are Mitochondrial matrix-facing.

The protein belongs to the cytochrome c oxidase subunit 2 family. Component of the cytochrome c oxidase (complex IV, CIV), a multisubunit enzyme composed of 14 subunits. The complex is composed of a catalytic core of 3 subunits MT-CO1, MT-CO2 and MT-CO3, encoded in the mitochondrial DNA, and 11 supernumerary subunits COX4I, COX5A, COX5B, COX6A, COX6B, COX6C, COX7A, COX7B, COX7C, COX8 and NDUFA4, which are encoded in the nuclear genome. The complex exists as a monomer or a dimer and forms supercomplexes (SCs) in the inner mitochondrial membrane with NADH-ubiquinone oxidoreductase (complex I, CI) and ubiquinol-cytochrome c oxidoreductase (cytochrome b-c1 complex, complex III, CIII), resulting in different assemblies (supercomplex SCI(1)III(2)IV(1) and megacomplex MCI(2)III(2)IV(2)). Found in a complex with TMEM177, COA6, COX18, COX20, SCO1 and SCO2. Interacts with TMEM177 in a COX20-dependent manner. Interacts with COX20. Interacts with COX16. The cofactor is Cu cation.

It is found in the mitochondrion inner membrane. The enzyme catalyses 4 Fe(II)-[cytochrome c] + O2 + 8 H(+)(in) = 4 Fe(III)-[cytochrome c] + 2 H2O + 4 H(+)(out). Component of the cytochrome c oxidase, the last enzyme in the mitochondrial electron transport chain which drives oxidative phosphorylation. The respiratory chain contains 3 multisubunit complexes succinate dehydrogenase (complex II, CII), ubiquinol-cytochrome c oxidoreductase (cytochrome b-c1 complex, complex III, CIII) and cytochrome c oxidase (complex IV, CIV), that cooperate to transfer electrons derived from NADH and succinate to molecular oxygen, creating an electrochemical gradient over the inner membrane that drives transmembrane transport and the ATP synthase. Cytochrome c oxidase is the component of the respiratory chain that catalyzes the reduction of oxygen to water. Electrons originating from reduced cytochrome c in the intermembrane space (IMS) are transferred via the dinuclear copper A center (CU(A)) of subunit 2 and heme A of subunit 1 to the active site in subunit 1, a binuclear center (BNC) formed by heme A3 and copper B (CU(B)). The BNC reduces molecular oxygen to 2 water molecules using 4 electrons from cytochrome c in the IMS and 4 protons from the mitochondrial matrix. The protein is Cytochrome c oxidase subunit 2 (mt-co2) of Megalops atlanticus (Tarpon).